The chain runs to 267 residues: MARDRRDTYYWRAKDEGYRSRAAYKLFQINEKHEVIKEDDTIVDLGAAPGGWLEVAKKISGGKIVGVDLRRIKEIEGVETIKGDITSDETIKKIIELVGEGGADVVICDAAPNLSGNWSLDHARSIDLTTSALECAKKILKPKGHFIVKVFQGDMFKEYMDKVRESFTYTRAFSPKASRPESAEIYVIGKKLLTAPLKIDDKFDVTIKKIGAKGNGIAFVEDFVVFMQDEVKKGENVRIKIVDVKPEFAFAIVIGRYDEELNEKNEE.

The S-adenosyl-L-methionine site is built by Gly50, Trp52, Asp68, Asp84, and Asp109. Lys149 functions as the Proton acceptor in the catalytic mechanism. Residues 196 to 255 (PLKIDDKFDVTIKKIGAKGNGIAFVEDFVVFMQDEVKKGENVRIKIVDVKPEFAFAIVIG) enclose the TRAM domain.

Belongs to the class I-like SAM-binding methyltransferase superfamily. RNA methyltransferase RlmE family.

It localises to the cytoplasm. The enzyme catalyses uridine(2552) in 23S rRNA + S-adenosyl-L-methionine = 2'-O-methyluridine(2552) in 23S rRNA + S-adenosyl-L-homocysteine + H(+). Specifically methylates the uridine in position 2552 of 23S rRNA at the 2'-O position of the ribose in the fully assembled 50S ribosomal subunit. The protein is Ribosomal RNA large subunit methyltransferase E of Methanococcoides burtonii (strain DSM 6242 / NBRC 107633 / OCM 468 / ACE-M).